Reading from the N-terminus, the 752-residue chain is Phosphoribosylformylglycinamidine synthase subunit PurL (752 aa).

The active site involves H58. ATP-binding residues include Y61 and K103. A Mg(2+)-binding site is contributed by E105. Substrate-binding positions include 106–109 and R128; that span reads SHNH. The active-site Proton acceptor is H107. D129 serves as a coordination point for Mg(2+). Q253 provides a ligand contact to substrate. Residue D281 participates in Mg(2+) binding. 325–327 lines the substrate pocket; that stretch reads ESQ. Positions 513 and 550 each coordinate ATP. Residue N551 coordinates Mg(2+). Residue S553 coordinates substrate.

This sequence belongs to the FGAMS family. Monomer. Part of the FGAM synthase complex composed of 1 PurL, 1 PurQ and 2 PurS subunits.

The protein resides in the cytoplasm. It carries out the reaction N(2)-formyl-N(1)-(5-phospho-beta-D-ribosyl)glycinamide + L-glutamine + ATP + H2O = 2-formamido-N(1)-(5-O-phospho-beta-D-ribosyl)acetamidine + L-glutamate + ADP + phosphate + H(+). It participates in purine metabolism; IMP biosynthesis via de novo pathway; 5-amino-1-(5-phospho-D-ribosyl)imidazole from N(2)-formyl-N(1)-(5-phospho-D-ribosyl)glycinamide: step 1/2. In terms of biological role, part of the phosphoribosylformylglycinamidine synthase complex involved in the purines biosynthetic pathway. Catalyzes the ATP-dependent conversion of formylglycinamide ribonucleotide (FGAR) and glutamine to yield formylglycinamidine ribonucleotide (FGAM) and glutamate. The FGAM synthase complex is composed of three subunits. PurQ produces an ammonia molecule by converting glutamine to glutamate. PurL transfers the ammonia molecule to FGAR to form FGAM in an ATP-dependent manner. PurS interacts with PurQ and PurL and is thought to assist in the transfer of the ammonia molecule from PurQ to PurL. This Streptomyces coelicolor (strain ATCC BAA-471 / A3(2) / M145) protein is Phosphoribosylformylglycinamidine synthase subunit PurL.